The primary structure comprises 250 residues: Triosephosphate isomerase (250 aa).

Position 9–11 (9–11 (NWK)) interacts with substrate. His96 (electrophile) is an active-site residue. Glu168 functions as the Proton acceptor in the catalytic mechanism. Substrate contacts are provided by residues Gly174, Ser216, and 237 to 238 (GG).

The protein belongs to the triosephosphate isomerase family. Homodimer.

The protein resides in the cytoplasm. The enzyme catalyses D-glyceraldehyde 3-phosphate = dihydroxyacetone phosphate. It functions in the pathway carbohydrate biosynthesis; gluconeogenesis. The protein operates within carbohydrate degradation; glycolysis; D-glyceraldehyde 3-phosphate from glycerone phosphate: step 1/1. In terms of biological role, involved in the gluconeogenesis. Catalyzes stereospecifically the conversion of dihydroxyacetone phosphate (DHAP) to D-glyceraldehyde-3-phosphate (G3P). The polypeptide is Triosephosphate isomerase (Leptospira interrogans serogroup Icterohaemorrhagiae serovar copenhageni (strain Fiocruz L1-130)).